The chain runs to 161 residues: Cyclic pyranopterin monophosphate synthase (161 aa).

Substrate contacts are provided by residues 75–77 (LCH) and 113–114 (ME). D128 is an active-site residue.

This sequence belongs to the MoaC family. In terms of assembly, homohexamer; trimer of dimers.

The enzyme catalyses (8S)-3',8-cyclo-7,8-dihydroguanosine 5'-triphosphate = cyclic pyranopterin phosphate + diphosphate. It participates in cofactor biosynthesis; molybdopterin biosynthesis. Its function is as follows. Catalyzes the conversion of (8S)-3',8-cyclo-7,8-dihydroguanosine 5'-triphosphate to cyclic pyranopterin monophosphate (cPMP). The protein is Cyclic pyranopterin monophosphate synthase of Escherichia coli O139:H28 (strain E24377A / ETEC).